The following is a 342-amino-acid chain: Uroporphyrinogen decarboxylase (342 aa).

Substrate-binding positions include 22–26, phenylalanine 41, aspartate 72, tyrosine 146, serine 201, and histidine 317; that span reads RQAGR.

This sequence belongs to the uroporphyrinogen decarboxylase family. As to quaternary structure, homodimer.

The protein localises to the cytoplasm. The enzyme catalyses uroporphyrinogen III + 4 H(+) = coproporphyrinogen III + 4 CO2. It participates in porphyrin-containing compound metabolism; protoporphyrin-IX biosynthesis; coproporphyrinogen-III from 5-aminolevulinate: step 4/4. Catalyzes the decarboxylation of four acetate groups of uroporphyrinogen-III to yield coproporphyrinogen-III. The polypeptide is Uroporphyrinogen decarboxylase (Orientia tsutsugamushi (strain Boryong) (Rickettsia tsutsugamushi)).